The primary structure comprises 172 residues: Achaete-scute homolog 4 (172 aa).

The bHLH domain occupies 72–124 (AFLRKRNERERQRVRCVNEGYARLRDHLPRELADKRLSKVETLRAAIDYIKHL). Residues 144–172 (QRRAECNSDGESKASSAPSPSSEPEEGGS) form a disordered region. The segment covering 145-155 (RRAECNSDGES) has biased composition (basic and acidic residues). Residues 156–165 (KASSAPSPSS) are compositionally biased toward low complexity.

In terms of tissue distribution, expressed in skin. 7-fold higher expression in fetal skin than in adult skin. Weak expression also detected in fetal lung, aorta and brain, and in adult stomach, kidney, ovary and breast.

The protein resides in the nucleus. Could be a transcriptional regulator involved in skin development. In Homo sapiens (Human), this protein is Achaete-scute homolog 4 (ASCL4).